The primary structure comprises 438 residues: Methylenetetrahydrofolate--tRNA-(uracil-5-)-methyltransferase TrmFO (438 aa).

9–14 serves as a coordination point for FAD; it reads GGGLAG.

This sequence belongs to the MnmG family. TrmFO subfamily. FAD is required as a cofactor.

The protein localises to the cytoplasm. It catalyses the reaction uridine(54) in tRNA + (6R)-5,10-methylene-5,6,7,8-tetrahydrofolate + NADH + H(+) = 5-methyluridine(54) in tRNA + (6S)-5,6,7,8-tetrahydrofolate + NAD(+). The catalysed reaction is uridine(54) in tRNA + (6R)-5,10-methylene-5,6,7,8-tetrahydrofolate + NADPH + H(+) = 5-methyluridine(54) in tRNA + (6S)-5,6,7,8-tetrahydrofolate + NADP(+). Functionally, catalyzes the folate-dependent formation of 5-methyl-uridine at position 54 (M-5-U54) in all tRNAs. The polypeptide is Methylenetetrahydrofolate--tRNA-(uracil-5-)-methyltransferase TrmFO (Lactobacillus johnsonii (strain CNCM I-12250 / La1 / NCC 533)).